A 528-amino-acid polypeptide reads, in one-letter code: Tyrosine--tRNA ligase, cytoplasmic (528 aa).

Residue Tyr39 coordinates L-tyrosine. The 'HIGH' region motif lies at Thr44–Tyr52. The L-tyrosine site is built by Tyr166, Gln170, Asp173, and Gln188. The 'KMSKS' region motif lies at Lys222 to Ser226. The Nuclear localization signal signature appears at Lys242 to Lys247. Residues Glu332–Glu362 form a disordered region. One can recognise a tRNA-binding domain in the interval Asp364–Tyr468.

This sequence belongs to the class-I aminoacyl-tRNA synthetase family. In terms of assembly, homodimer.

It is found in the cytoplasm. It localises to the nucleus. The catalysed reaction is tRNA(Tyr) + L-tyrosine + ATP = L-tyrosyl-tRNA(Tyr) + AMP + diphosphate + H(+). Its function is as follows. Catalyzes the attachment of tyrosine to tRNA(Tyr) in a two-step reaction: tyrosine is first activated by ATP to form Tyr-AMP and then transferred to the acceptor end of tRNA(Tyr). In Xenopus laevis (African clawed frog), this protein is Tyrosine--tRNA ligase, cytoplasmic (yars1).